Reading from the N-terminus, the 608-residue chain is Microtubule-associated protein 70-3 (608 aa).

The disordered stretch occupies residues 1-23 (MADGVEEGNAVAPRGPARRRGTV). Residues 40 to 346 (DPVRVELTRL…ARSEAQLKEK (307 aa)) adopt a coiled-coil conformation. The interval 224–458 (ILDKLQRQKV…HLLNRSTDAV (235 aa)) is required for targeting to microtubules. Disordered regions lie at residues 354–493 (LEDG…TANN) and 570–608 (DKEQ…RNYQ). Residues 363 to 379 (SGSSRLPTEGKSFSNGP) show a composition bias toward polar residues. The segment covering 402–421 (RRSPSFHSRSSLSSSSSLVL) has biased composition (low complexity). The span at 476 to 493 (IENTNSNTDESNKETANN) shows a compositional bias: polar residues. Residues 542 to 576 (LTKAMEVEAKKMRREVAAMEKEVAAMRVDKEQEVK) are a coiled coil. Residues 586–608 (TGSSQVLSGSRSSSRSGLTRNYQ) are compositionally biased toward low complexity.

This sequence belongs to the MAP70 family.

The protein resides in the cytoplasm. Its subcellular location is the cytoskeleton. Its function is as follows. Plant-specific protein that interact with microtubules. The polypeptide is Microtubule-associated protein 70-3 (MAP70.3) (Oryza sativa subsp. japonica (Rice)).